The chain runs to 256 residues: Minor capsid protein P7 (256 aa).

Hydrophobic regions lie at residues 24 to 44 and 47 to 67; these read LLFA…IIMK and TKHM…IFML. 3 disulfide bridges follow: Cys120–Cys134, Cys156–Cys172, and Cys188–Cys211.

As to quaternary structure, interacts with the major capsid protein. In terms of processing, stabilized by 3 intramolecular disulfide bonds.

Its subcellular location is the virion. In terms of biological role, one of the minor capsid proteins that constitute a network internal to the major capsid proteins and outside the lipid membrane. The minor capsid proteins glue and stabilize the capsomers. This chain is Minor capsid protein P7, found in Paramecium bursaria Chlorella virus 1 (PBCV-1).